A 549-amino-acid polypeptide reads, in one-letter code: Oxygen-dependent choline dehydrogenase (549 aa).

4–33 (DYVIVGSGSAGSAIAYRLSEDGRYSVIVIE) contacts FAD. The active-site Proton acceptor is H465. The tract at residues 528 to 549 (KTPLPRSNQEPWVNPRAAVSDR) is disordered.

The protein belongs to the GMC oxidoreductase family. Requires FAD as cofactor.

The catalysed reaction is choline + A = betaine aldehyde + AH2. The enzyme catalyses betaine aldehyde + NAD(+) + H2O = glycine betaine + NADH + 2 H(+). The protein operates within amine and polyamine biosynthesis; betaine biosynthesis via choline pathway; betaine aldehyde from choline (cytochrome c reductase route): step 1/1. Involved in the biosynthesis of the osmoprotectant glycine betaine. Catalyzes the oxidation of choline to betaine aldehyde and betaine aldehyde to glycine betaine at the same rate. The polypeptide is Oxygen-dependent choline dehydrogenase (Agrobacterium fabrum (strain C58 / ATCC 33970) (Agrobacterium tumefaciens (strain C58))).